The following is a 635-amino-acid chain: Threonine--tRNA ligase (635 aa).

The TGS domain maps to methionine 1–threonine 61. Positions aspartate 242–proline 533 are catalytic. Cysteine 333, histidine 384, and histidine 510 together coordinate Zn(2+).

Belongs to the class-II aminoacyl-tRNA synthetase family. In terms of assembly, homodimer. The cofactor is Zn(2+).

The protein localises to the cytoplasm. It carries out the reaction tRNA(Thr) + L-threonine + ATP = L-threonyl-tRNA(Thr) + AMP + diphosphate + H(+). Catalyzes the attachment of threonine to tRNA(Thr) in a two-step reaction: L-threonine is first activated by ATP to form Thr-AMP and then transferred to the acceptor end of tRNA(Thr). Also edits incorrectly charged L-seryl-tRNA(Thr). The polypeptide is Threonine--tRNA ligase (Rickettsia rickettsii (strain Sheila Smith)).